The primary structure comprises 289 residues: ATP synthase gamma chain (289 aa).

It belongs to the ATPase gamma chain family. In terms of assembly, F-type ATPases have 2 components, CF(1) - the catalytic core - and CF(0) - the membrane proton channel. CF(1) has five subunits: alpha(3), beta(3), gamma(1), delta(1), epsilon(1). CF(0) has three main subunits: a, b and c.

Its subcellular location is the cell inner membrane. Functionally, produces ATP from ADP in the presence of a proton gradient across the membrane. The gamma chain is believed to be important in regulating ATPase activity and the flow of protons through the CF(0) complex. In Actinobacillus succinogenes (strain ATCC 55618 / DSM 22257 / CCUG 43843 / 130Z), this protein is ATP synthase gamma chain.